Consider the following 247-residue polypeptide: Oil body-associated protein 2A (247 aa).

The tract at residues 1–26 (MASSDERPGAYPARDGSENLPPGDPK) is disordered.

The protein belongs to the OBAP family.

The polypeptide is Oil body-associated protein 2A (Arabidopsis thaliana (Mouse-ear cress)).